The following is a 204-amino-acid chain: Urease accessory protein UreG 1 (204 aa).

14-21 is a GTP binding site; it reads GPVGSGKT.

The protein belongs to the SIMIBI class G3E GTPase family. UreG subfamily. In terms of assembly, homodimer. UreD, UreF and UreG form a complex that acts as a GTP-hydrolysis-dependent molecular chaperone, activating the urease apoprotein by helping to assemble the nickel containing metallocenter of UreC. The UreE protein probably delivers the nickel.

The protein localises to the cytoplasm. In terms of biological role, facilitates the functional incorporation of the urease nickel metallocenter. This process requires GTP hydrolysis, probably effectuated by UreG. This Methylorubrum populi (strain ATCC BAA-705 / NCIMB 13946 / BJ001) (Methylobacterium populi) protein is Urease accessory protein UreG 1.